A 630-amino-acid chain; its full sequence is 1,4-alpha-glucan branching enzyme GlgB (630 aa).

Catalysis depends on Asp-311, which acts as the Nucleophile. Glu-362 (proton donor) is an active-site residue.

This sequence belongs to the glycosyl hydrolase 13 family. GlgB subfamily. In terms of assembly, monomer.

The catalysed reaction is Transfers a segment of a (1-&gt;4)-alpha-D-glucan chain to a primary hydroxy group in a similar glucan chain.. It functions in the pathway glycan biosynthesis; glycogen biosynthesis. Its function is as follows. Catalyzes the formation of the alpha-1,6-glucosidic linkages in glycogen by scission of a 1,4-alpha-linked oligosaccharide from growing alpha-1,4-glucan chains and the subsequent attachment of the oligosaccharide to the alpha-1,6 position. This is 1,4-alpha-glucan branching enzyme GlgB from Aquifex aeolicus (strain VF5).